The chain runs to 318 residues: Acetylglutamate kinase (318 aa).

Substrate-binding positions include 80–81, Arg-102, and Asn-203; that span reads GG.

This sequence belongs to the acetylglutamate kinase family. ArgB subfamily.

The protein localises to the cytoplasm. It catalyses the reaction N-acetyl-L-glutamate + ATP = N-acetyl-L-glutamyl 5-phosphate + ADP. It functions in the pathway amino-acid biosynthesis; L-arginine biosynthesis; N(2)-acetyl-L-ornithine from L-glutamate: step 2/4. Its function is as follows. Catalyzes the ATP-dependent phosphorylation of N-acetyl-L-glutamate. This chain is Acetylglutamate kinase, found in Bifidobacterium adolescentis (strain ATCC 15703 / DSM 20083 / NCTC 11814 / E194a).